The primary structure comprises 201 residues: Recombination protein RecR (201 aa).

The C4-type zinc finger occupies 60–75; sequence CSECGNMDVSDPCTVC. The region spanning 83 to 178 is the Toprim domain; it reads AAICVVETVG…SITSLARGVP (96 aa).

The protein belongs to the RecR family.

May play a role in DNA repair. It seems to be involved in an RecBC-independent recombinational process of DNA repair. It may act with RecF and RecO. This chain is Recombination protein RecR, found in Maricaulis maris (strain MCS10) (Caulobacter maris).